A 420-amino-acid chain; its full sequence is Serine--tRNA ligase (420 aa).

227 to 229 (TSE) contacts L-serine. Residues 258 to 260 (RRE) and Val274 contribute to the ATP site. Glu281 is an L-serine binding site. 345–348 (ELTS) provides a ligand contact to ATP. Thr380 is a binding site for L-serine.

Belongs to the class-II aminoacyl-tRNA synthetase family. Type-1 seryl-tRNA synthetase subfamily. As to quaternary structure, homodimer. The tRNA molecule binds across the dimer.

Its subcellular location is the cytoplasm. It carries out the reaction tRNA(Ser) + L-serine + ATP = L-seryl-tRNA(Ser) + AMP + diphosphate + H(+). The catalysed reaction is tRNA(Sec) + L-serine + ATP = L-seryl-tRNA(Sec) + AMP + diphosphate + H(+). It functions in the pathway aminoacyl-tRNA biosynthesis; selenocysteinyl-tRNA(Sec) biosynthesis; L-seryl-tRNA(Sec) from L-serine and tRNA(Sec): step 1/1. Its function is as follows. Catalyzes the attachment of serine to tRNA(Ser). Is also able to aminoacylate tRNA(Sec) with serine, to form the misacylated tRNA L-seryl-tRNA(Sec), which will be further converted into selenocysteinyl-tRNA(Sec). The chain is Serine--tRNA ligase from Nocardia farcinica (strain IFM 10152).